Reading from the N-terminus, the 414-residue chain is Cytochrome P450 GfsF (414 aa).

Residues 1–32 (MTDTTLVEAGDPAEDAPEWPMKRDTGCPFDPP) form a disordered region. Heme b is bound by residues His75, His107, Arg111, Arg303, His361, and Cys363.

The protein belongs to the cytochrome P450 family. Monomer. Requires heme b as cofactor.

It functions in the pathway antibiotic biosynthesis. Its function is as follows. Involved in the synthesis of the 16-membered macrolide antibiotics FD-891 and FD-892. Consecutively catalyzes epoxidation of C8-C9 and then hydroxylation at C10 to convert 25-O-methyl-FD-892 to FD-891. Consecutively catalyzes epoxidation of C8-C9 and then hydroxylation at C10 to convert 8,9-epoxy-FD-892 to 25-O-demethyl-FD-891 as well as converting 25-oxo-FD-892 to 8,9-epoxy-25-oxo-FD-892 and 8,9-epoxy-10-hydroxy-25-oxo-FD-892. In vitro is furnished with P.putida putidaredoxin and putidaredoxin reductase to provide the required two-electron reduction. This Streptomyces halstedii protein is Cytochrome P450 GfsF.